The chain runs to 466 residues: MADQLYLENIDEFVTDQNKIVTYKWLSYTLGVHVNQAKQMLYDYVERKRKENSGAQLHVTYLVSGSLIQNGHSCHKVAVVREDKLEAVKSKLAVTASIHVYSIQKAMLKDSGPLFNTDYDILKSNLQNCSKFSAIQCAAAVPRAPAESSSSSKKFEQSHLHMSSETQANNELTTNGHGPPASKQVSQQPKGIMGMFASKAAAKTQETNKETKTEAKEVTNASAAGNKAPGKGNMMSNFFGKAAMNKFKVNLDSEQAVKEEKIVEQPTVSVTEPKLATPAGLKKSSKKAEPVKVLQKEKKRGKRVALSDDETKETENMRKKRRRIKLPESDSSEDEVFPDSPGAYEAESPSPPPPPSPPLEPVPKTEPEPPSVKSSSGENKRKRKRVLKSKTYLDGEGCIVTEKVYESESCTDSEEELNMKTSSVHRPPAMTVKKEPREERKGPKKGTAALGKANRQVSITGFFQRK.

Position 2 is an N-acetylalanine (Ala2). Disordered regions lie at residues 169–188 (NNEL…VSQQ) and 199–232 (KAAA…PGKG). Residues 206 to 217 (ETNKETKTEAKE) show a composition bias toward basic and acidic residues. A Glycyl lysine isopeptide (Lys-Gly) (interchain with G-Cter in SUMO); alternate cross-link involves residue Lys258. Lys258 participates in a covalent cross-link: Glycyl lysine isopeptide (Lys-Gly) (interchain with G-Cter in SUMO2); alternate. Residue Lys261 forms a Glycyl lysine isopeptide (Lys-Gly) (interchain with G-Cter in SUMO2) linkage. Disordered regions lie at residues 274 to 393 (KLAT…KTYL) and 406 to 466 (ESES…FQRK). Residue Thr277 is modified to Phosphothreonine. Basic and acidic residues predominate over residues 286–296 (KKAEPVKVLQK). Ser307 carries the post-translational modification Phosphoserine. The span at 349 to 361 (PSPPPPPSPPLEP) shows a compositional bias: pro residues. Phosphoserine occurs at positions 407 and 409. Thr411 is subject to Phosphothreonine. Position 413 is a phosphoserine (Ser413). Over residues 432–441 (VKKEPREERK) the composition is skewed to basic and acidic residues. Lys433 is covalently cross-linked (Glycyl lysine isopeptide (Lys-Gly) (interchain with G-Cter in SUMO); alternate). Residue Lys433 forms a Glycyl lysine isopeptide (Lys-Gly) (interchain with G-Cter in SUMO2); alternate linkage. Residues 455-466 (RQVSITGFFQRK) show a composition bias toward polar residues. The short motif at 456 to 463 (QVSITGFF) is the PIP-box element. A Phosphoserine modification is found at Ser458.

In terms of assembly, component of both the DNA polymerase delta and DNA polymerase zeta complexes. The tetrameric DNA polymerase delta complex (Pol-delta4), which consists of POLD1/p125, POLD2/p50, POLD3/p66/p68 and POLD4/p12, with POLD1 bearing DNA polymerase and 3' to 5' proofreading exonuclease activities. Within this complex, directly interacts with POLD2. Following stress caused by DNA damaging agents or by replication stress, POLD4 is degraded and Pol-delta4 is converted into a trimeric form of the complex (Pol-delta3), which consists of POLD1, POLD2 and POLD3. Pol-delta3 is the major form occurring at S phase replication sites, as well as DNA damage sites. Directly interacts with PCNA, as do POLD1 and POLD4; this interaction stimulates Pol-delta polymerase activity. POLD3 phosphorylation at Ser-458 impairs PCNA binding. Component of the DNA polymerase zeta complex (POLZ), which consists of REV3L, MAD2L2, POLD2 and POLD3, with REV3L bearing DNA polymerase catalytic activity. The DNA polymerase delta complex interacts with POLDIP2; this interaction is probably mediated through direct binding to POLD2. Post-translationally, ubiquitinated, but not targeted to the proteasome. Sumoylated. Sumoylation with SUMO3 may be predominant. Phosphorylation at Ser-458 is catalyzed in vitro by PKA. It is thought to decrease the affinity for PCNA and Pol-delta4 processivity. Can also be phosphorylated in vitro by CDK1-cyclin-A complex, as well as CDK2-cyclin-A and CDK2-cyclin-E complexes. PCNA interferes with CDK-cyclin phosphorylation.

Its subcellular location is the cytoplasm. The protein resides in the nucleus. Accessory component of both the DNA polymerase delta complex and the DNA polymerase zeta complex. As a component of the trimeric and tetrameric DNA polymerase delta complexes (Pol-delta3 and Pol-delta4, respectively), plays a role in high fidelity genome replication, including in lagging strand synthesis, and repair. Required for optimal Pol-delta activity. Stabilizes the Pol-delta complex and plays a major role in Pol-delta stimulation by PCNA. Pol-delta3 and Pol-delta4 are characterized by the absence or the presence of POLD4. They exhibit differences in catalytic activity. Most notably, Pol-delta3 shows higher proofreading activity than Pol-delta4. Although both Pol-delta3 and Pol-delta4 process Okazaki fragments in vitro, Pol-delta3 may also be better suited to fulfill this task, exhibiting near-absence of strand displacement activity compared to Pol-delta4 and stalling on encounter with the 5'-blocking oligonucleotides. Pol-delta3 idling process may avoid the formation of a gap, while maintaining a nick that can be readily ligated. Along with DNA polymerase kappa, DNA polymerase delta carries out approximately half of nucleotide excision repair (NER) synthesis following UV irradiation. In this context, POLD3, along with PCNA and RFC1-replication factor C complex, is required to recruit POLD1, the catalytic subunit of the polymerase delta complex, to DNA damage sites. Under conditions of DNA replication stress, required for the repair of broken replication forks through break-induced replication (BIR). Involved in the translesion synthesis (TLS) of templates carrying O6-methylguanine or abasic sites performed by Pol-delta4, independently of DNA polymerase zeta (REV3L) or eta (POLH). Facilitates abasic site bypass by DNA polymerase delta by promoting extension from the nucleotide inserted opposite the lesion. Also involved in TLS, as a component of the tetrameric DNA polymerase zeta complex. Along with POLD2, dramatically increases the efficiency and processivity of DNA synthesis of the DNA polymerase zeta complex compared to the minimal zeta complex, consisting of only REV3L and REV7. In Homo sapiens (Human), this protein is DNA polymerase delta subunit 3 (POLD3).